Here is a 103-residue protein sequence, read N- to C-terminus: Large ribosomal subunit protein bL21 (103 aa).

Belongs to the bacterial ribosomal protein bL21 family. Part of the 50S ribosomal subunit. Contacts protein L20.

In terms of biological role, this protein binds to 23S rRNA in the presence of protein L20. The chain is Large ribosomal subunit protein bL21 from Acinetobacter baumannii (strain AB307-0294).